The primary structure comprises 332 residues: L-lactate dehydrogenase A chain (332 aa).

NAD(+)-binding positions include 29–57 and R99; that span reads GMVG…MEDK. Residues R106, N138, and R169 each coordinate substrate. Residue N138 participates in NAD(+) binding. The active-site Proton acceptor is the H193. Substrate is bound at residue T248.

This sequence belongs to the LDH/MDH superfamily. LDH family. In terms of assembly, homotetramer.

It localises to the cytoplasm. The enzyme catalyses (S)-lactate + NAD(+) = pyruvate + NADH + H(+). The protein operates within fermentation; pyruvate fermentation to lactate; (S)-lactate from pyruvate: step 1/1. Functionally, interconverts simultaneously and stereospecifically pyruvate and lactate with concomitant interconversion of NADH and NAD(+). The polypeptide is L-lactate dehydrogenase A chain (ldha) (Gillichthys seta (Shortjaw mudsucker)).